Reading from the N-terminus, the 285-residue chain is Ribosomal protein L11 methyltransferase (285 aa).

S-adenosyl-L-methionine is bound by residues T131, G154, D176, and N223.

This sequence belongs to the methyltransferase superfamily. PrmA family.

It is found in the cytoplasm. The catalysed reaction is L-lysyl-[protein] + 3 S-adenosyl-L-methionine = N(6),N(6),N(6)-trimethyl-L-lysyl-[protein] + 3 S-adenosyl-L-homocysteine + 3 H(+). Functionally, methylates ribosomal protein L11. The polypeptide is Ribosomal protein L11 methyltransferase (Brucella suis (strain ATCC 23445 / NCTC 10510)).